Consider the following 442-residue polypeptide: GTPase Obg (442 aa).

Residues 1–158 (MFYDQARIFV…HWLELELKLL (158 aa)) form the Obg domain. In terms of domain architecture, OBG-type G spans 159-329 (ADVGLVGFPN…LIYHVHKGLE (171 aa)). Residues 165-172 (GFPNVGKS), 190-194 (FTTLE), 212-215 (DIPG), 282-285 (NKMD), and 310-312 (SAA) contribute to the GTP site. Mg(2+)-binding residues include Ser172 and Thr192. Residues 349–427 (FTGKTEERFK…IGDLDFDFIE (79 aa)) form the OCT domain.

It belongs to the TRAFAC class OBG-HflX-like GTPase superfamily. OBG GTPase family. As to quaternary structure, monomer. Mg(2+) serves as cofactor.

It localises to the cytoplasm. An essential GTPase which binds GTP, GDP and possibly (p)ppGpp with moderate affinity, with high nucleotide exchange rates and a fairly low GTP hydrolysis rate. Plays a role in control of the cell cycle, stress response, ribosome biogenesis and in those bacteria that undergo differentiation, in morphogenesis control. The chain is GTPase Obg from Heliobacterium modesticaldum (strain ATCC 51547 / Ice1).